The following is a 518-amino-acid chain: GRIN2-like protein (518 aa).

Disordered regions lie at residues 1–23 (MGLE…QSRT) and 467–500 (QTEP…FRTM). The segment covering 476–494 (KSDEDPLNKEPSSDKMEKK) has biased composition (basic and acidic residues).

In terms of assembly, may interact with GNAO1.

Functionally, may be involved in neurite outgrowth. In Gallus gallus (Chicken), this protein is GRIN2-like protein.